The following is a 400-amino-acid chain: Large envelope protein (400 aa).

Methionine 1 is modified (N-acetylmethionine). 2 disordered regions span residues 1–24 and 86–114; these read MGGWSSKPRKGMGTNLSVPNPLGF and TTVPAAPPPASTNRQSGRQPTPFSPPLRD. Glycine 2 carries N-myristoyl glycine; by host lipidation. The segment at 2–119 is pre-S1; sequence GGWSSKPRKG…PPLRDTHPQA (118 aa). The interval 2-174 is pre-S; sequence GGWSSKPRKG…SSKTGDPVPN (173 aa). The Virion surface; in external conformation segment spans residues 2 to 181; the sequence is GGWSSKPRKG…VPNMENIASG (180 aa). Residues 2–253 lie on the Intravirion; in internal conformation side of the membrane; sequence GGWSSKPRKG…PGYRWMCLRR (252 aa). Tryptophan 4 is a glycosylation site (N-linked (GlcNAc...) asparagine). Residues 96–106 show a composition bias toward polar residues; that stretch reads STNRQSGRQPT. Residues 120–174 form a pre-S2 region; sequence MQWNSTTFLQTLQDSRVRALYLPAGGSSSGTVSPAQNTVSAISSISSKTGDPVPN. Residues 182 to 202 form a helical membrane-spanning segment; sequence LLGHLLVLQAGFFSLTKILTI. The Intravirion; in external conformation segment spans residues 203 to 253; it reads PQSLDSWWTSLNFLGGTPACPGQNSQSQISSHSPTCCPPICPGYRWMCLRR. Residues 254-274 form a helical membrane-spanning segment; that stretch reads FIIFLCILLLCLIFLLVLLDY. Residues 275–348 lie on the Virion surface side of the membrane; sequence QGMLPVCPLT…WASVRFSWLS (74 aa). Asparagine 320 carries N-linked (GlcNAc...) asparagine; by host glycosylation. A helical membrane pass occupies residues 349–369; that stretch reads LLVPFVQWFVGLSPTVWLSVI. Residues 370 to 375 lie on the Intravirion side of the membrane; the sequence is WMMWFW. The chain crosses the membrane as a helical span at residues 376–398; that stretch reads GPSLYNILRPFMPLLPTFFCLWV. The Virion surface segment spans residues 399 to 400; that stretch reads YI.

It belongs to the orthohepadnavirus major surface antigen family. As to quaternary structure, interacts (via its myristoylated pre-S1 region) with the host SLC10A1/NTCP; this interaction is essential for viral entry. In terms of assembly, in its internal form (Li-HBsAg), interacts with the capsid protein and with the isoform S. Interacts with host chaperone CANX. Associates with host chaperone CANX through its pre-S2 N glycan; this association may be essential for isoform M proper secretion. As to quaternary structure, interacts with isoform L. Interacts with the antigens of satellite virus HDV (HDVAgs); this interaction is required for encapsidation of HDV genomic RNA. Isoform M is N-terminally acetylated by host at a ratio of 90%, and N-glycosylated by host at the pre-S2 region. In terms of processing, myristoylated; this modification is essential for its interaction with the host protein SLC10A1/NTCP.

It localises to the virion membrane. The large envelope protein exists in two topological conformations, one which is termed 'external' or Le-HBsAg and the other 'internal' or Li-HBsAg. In its external conformation the protein attaches the virus to cell receptors and thereby initiating infection. This interaction determines the species specificity and liver tropism. This attachment induces virion internalization predominantly through caveolin-mediated endocytosis. The large envelope protein also assures fusion between virion membrane and endosomal membrane. In its internal conformation the protein plays a role in virion morphogenesis and mediates the contact with the nucleocapsid like a matrix protein. In terms of biological role, the middle envelope protein plays an important role in the budding of the virion. It is involved in the induction of budding in a nucleocapsid independent way. In this process the majority of envelope proteins bud to form subviral lipoprotein particles of 22 nm of diameter that do not contain a nucleocapsid. This Hepatitis B virus genotype B2 subtype adw (isolate China/patient4/1996) (HBV-B) protein is Large envelope protein.